The primary structure comprises 264 residues: Ribonuclease HII (264 aa).

Residues 69 to 263 (KVVCGIDEVG…EENAKTITKP (195 aa)) enclose the RNase H type-2 domain. The a divalent metal cation site is built by Asp-75, Glu-76, and Asp-166.

It belongs to the RNase HII family. Mn(2+) is required as a cofactor. Requires Mg(2+) as cofactor.

The protein localises to the cytoplasm. The catalysed reaction is Endonucleolytic cleavage to 5'-phosphomonoester.. Its function is as follows. Endonuclease that specifically degrades the RNA of RNA-DNA hybrids. The chain is Ribonuclease HII from Macrococcus caseolyticus (strain JCSC5402) (Macrococcoides caseolyticum).